The sequence spans 444 residues: Probable glycine dehydrogenase (decarboxylating) subunit 1 (444 aa).

Belongs to the GcvP family. N-terminal subunit subfamily. As to quaternary structure, the glycine cleavage system is composed of four proteins: P, T, L and H. In this organism, the P 'protein' is a heterodimer of two subunits.

It catalyses the reaction N(6)-[(R)-lipoyl]-L-lysyl-[glycine-cleavage complex H protein] + glycine + H(+) = N(6)-[(R)-S(8)-aminomethyldihydrolipoyl]-L-lysyl-[glycine-cleavage complex H protein] + CO2. The glycine cleavage system catalyzes the degradation of glycine. The P protein binds the alpha-amino group of glycine through its pyridoxal phosphate cofactor; CO(2) is released and the remaining methylamine moiety is then transferred to the lipoamide cofactor of the H protein. In Chlorobium luteolum (strain DSM 273 / BCRC 81028 / 2530) (Pelodictyon luteolum), this protein is Probable glycine dehydrogenase (decarboxylating) subunit 1.